The sequence spans 391 residues: Histidinol-phosphate aminotransferase (391 aa).

The residue at position 248 (Lys-248) is an N6-(pyridoxal phosphate)lysine.

This sequence belongs to the class-II pyridoxal-phosphate-dependent aminotransferase family. Histidinol-phosphate aminotransferase subfamily. In terms of assembly, homodimer. It depends on pyridoxal 5'-phosphate as a cofactor.

It catalyses the reaction L-histidinol phosphate + 2-oxoglutarate = 3-(imidazol-4-yl)-2-oxopropyl phosphate + L-glutamate. The protein operates within amino-acid biosynthesis; L-histidine biosynthesis; L-histidine from 5-phospho-alpha-D-ribose 1-diphosphate: step 7/9. The polypeptide is Histidinol-phosphate aminotransferase (Shewanella oneidensis (strain ATCC 700550 / JCM 31522 / CIP 106686 / LMG 19005 / NCIMB 14063 / MR-1)).